The following is a 129-amino-acid chain: Ig lambda-1 chain V regions MOPC 104E/RPC20/J558/S104 (129 aa).

The signal sequence occupies residues 1-19; it reads MAWISLILSLLALSSGAIS. Glutamine 20 carries the pyrrolidone carboxylic acid modification. The Ig-like domain occupies 20–125; sequence QAVVTQESAL…HWVFGGGTKL (106 aa).

The polypeptide is Ig lambda-1 chain V regions MOPC 104E/RPC20/J558/S104 (Mus musculus (Mouse)).